Here is a 64-residue protein sequence, read N- to C-terminus: Conotoxin mr5.3 (64 aa).

The N-terminal stretch at 1-19 is a signal peptide; that stretch reads MRCVPVFVILLLLIASVPS. A propeptide spanning residues 20–48 is cleaved from the precursor; that stretch reads VDAQLKTKDDMPLASSHANVKRTLQILRN. 4-carboxyglutamate is present on residues Glu56 and Glu60.

Post-translationally, contains 2 disulfide bonds that can be either 'C1-C3, C2-C4' or 'C1-C4, C2-C3', since these disulfide connectivities have been observed for conotoxins with cysteine framework V (for examples, see AC P0DQQ7 and AC P81755). As to expression, expressed by the venom duct.

The protein localises to the secreted. The polypeptide is Conotoxin mr5.3 (Conus marmoreus (Marble cone)).